The following is a 377-amino-acid chain: Leukocyte elastase inhibitor (377 aa).

Methionine 1 carries the post-translational modification N-acetylmethionine.

The protein belongs to the serpin family. Ov-serpin subfamily.

Its subcellular location is the cytoplasm. Functionally, regulates the activity of the neutrophil proteases. This Xenopus tropicalis (Western clawed frog) protein is Leukocyte elastase inhibitor (serpinb1).